The chain runs to 209 residues: Glycerol-3-phosphate acyltransferase (209 aa).

Transmembrane regions (helical) follow at residues 5 to 25 (IIGMIIIAYLLGSIPTGLWIG), 50 to 70 (LGFKAGVVVLFIDILKGTLAA), 74 to 94 (YFLGISGTVNPLLIGLFASLG), 115 to 135 (ILLAYNPLLFVVACLIFIFVL), and 151 to 171 (AIFIIALFIHAWILAIVAGIL).

It belongs to the PlsY family. In terms of assembly, probably interacts with PlsX.

The protein resides in the cell membrane. It catalyses the reaction an acyl phosphate + sn-glycerol 3-phosphate = a 1-acyl-sn-glycero-3-phosphate + phosphate. It functions in the pathway lipid metabolism; phospholipid metabolism. In terms of biological role, catalyzes the transfer of an acyl group from acyl-phosphate (acyl-PO(4)) to glycerol-3-phosphate (G3P) to form lysophosphatidic acid (LPA). This enzyme utilizes acyl-phosphate as fatty acyl donor, but not acyl-CoA or acyl-ACP. This chain is Glycerol-3-phosphate acyltransferase, found in Limosilactobacillus reuteri (strain DSM 20016) (Lactobacillus reuteri).